Reading from the N-terminus, the 391-residue chain is UDP-galactose transporter homolog 1 (391 aa).

5 consecutive transmembrane segments (helical) span residues 3–23 (LLQL…WGLL), 52–72 (LFLN…YLLV), 126–147 (YILI…LRYI), 178–198 (YKYA…AFAP), and 207–227 (APES…VLDG). Residue asparagine 230 is glycosylated (N-linked (GlcNAc...) asparagine). 4 consecutive transmembrane segments (helical) span residues 250–270 (MMLV…TLPI), 298–318 (DIIA…ETLE), 323–343 (LTLV…SVVV), and 347–367 (ELSK…GIEA).

Belongs to the nucleotide-sugar transporter family. SLC35B subfamily.

Its subcellular location is the endoplasmic reticulum membrane. Its function is as follows. May be involved in specific transport of UDP-Gal from the cytosol to the Golgi lumen. Involved in the maintenance of optimal conditions for the folding of secretory pathway proteins in the endoplasmic reticulum. This Mycosarcoma maydis (Corn smut fungus) protein is UDP-galactose transporter homolog 1 (HUT1).